The primary structure comprises 199 residues: Large ribosomal subunit protein uL18 (199 aa).

Belongs to the universal ribosomal protein uL18 family. As to quaternary structure, part of the 50S ribosomal subunit. Contacts the 5S and 23S rRNAs.

Functionally, this is one of the proteins that bind and probably mediate the attachment of the 5S RNA into the large ribosomal subunit, where it forms part of the central protuberance. The sequence is that of Large ribosomal subunit protein uL18 from Saccharolobus solfataricus (strain ATCC 35092 / DSM 1617 / JCM 11322 / P2) (Sulfolobus solfataricus).